A 1187-amino-acid polypeptide reads, in one-letter code: uncharacterized protein (1187 aa).

A compositionally biased stretch (polar residues) spans 38 to 57 (KNNQDIPTSNTNISPKPISQ). Disordered stretches follow at residues 38-127 (KNNQ…NSPT), 189-215 (ISRS…IHLN), 248-287 (TQPP…SQLQ), 358-415 (NNNS…NSNS), 443-490 (FPNN…INNN), 536-689 (QFPF…SSLN), 752-840 (SINN…NKSI), and 1079-1187 (HNNN…NLQK). Low complexity-rich tracts occupy residues 71-84 (KPIV…STLI), 104-124 (PSSS…SIPN), 190-215 (SRSS…IHLN), and 248-274 (TQPP…QAPH). Over residues 443–455 (FPNNTDENYPSDH) the composition is skewed to polar residues. Composition is skewed to low complexity over residues 458–490 (NDNN…INNN), 543–570 (TTES…SSSA), 585–653 (INNL…SNIN), 662–689 (PNSP…SSLN), 752–790 (SINN…TTNN), and 797–809 (NYKI…NIDN). Positions 815 to 832 (NDDDNDDDDDDDVDDNDD) are enriched in acidic residues. Low complexity-rich tracts occupy residues 1079–1149 (HNNN…PSNN) and 1156–1174 (KNNN…NNTN).

This is an uncharacterized protein from Dictyostelium discoideum (Social amoeba).